Consider the following 573-residue polypeptide: Putative 15-O-acetyltransferase SAT12 (573 aa).

The segment at 1-40 (MLDDDCSPTSSSEMSNASSREASITSRSSSTSGNNSLPED) is disordered. Residues 7–36 (SPTSSSEMSNASSREASITSRSSSTSGNNS) are compositionally biased toward low complexity.

It belongs to the trichothecene O-acetyltransferase family.

It functions in the pathway mycotoxin biosynthesis. Its function is as follows. Putative 15-O-acetyltransferase; part of the satratoxin SC2 cluster involved in the biosynthesis of satratoxins, trichothecene mycotoxins that are associated with human food poisonings. Satratoxins are suggested to be made by products of multiple gene clusters (SC1, SC2 and SC3) that encode 21 proteins in all, including polyketide synthases, acetyltransferases, and other enzymes expected to modify the trichothecene skeleton. SC1 encodes 10 proteins, SAT1 to SAT10. The largest are SAT8, which encodes a putative polyketide synthase (PKS) with a conventional non-reducing architecture, and SAT10, a putative protein containing four ankyrin repeats and thus may be involved in protein scaffolding. The putative short-chain reductase SAT3 may assist the PKS in some capacity. SAT6 contains a secretory lipase domain and acts probably as a trichothecene esterase. SAT5 encodes a putative acetyltransferase, and so, with SAT6, may affect endogenous protection from toxicity. The probable transcription factor SAT9 may regulate the expression of the SC1 cluster. SC2 encodes proteins SAT11 to SAT16, the largest of which encodes the putative reducing PKS SAT13. SAT11 is a cytochrome P450 monooxygenase, while SAT14 and SAT16 are probable acetyltransferases. The SC2 cluster may be regulated by the transcription factor SAT15. SC3 is a small cluster that encodes 5 proteins, SAT17 to SAT21. SAT21 is a putative MFS-type transporter which may have a role in exporting secondary metabolites. The four other proteins putatively encoded in SC3 include the taurine hydroxylase-like protein SAT17, the O-methyltransferase SAT18, the acetyltransferase SAT19, and the Cys6-type zinc finger SAT20, the latter being probably involved in regulation of SC3 expression. This Stachybotrys chartarum (strain CBS 109288 / IBT 7711) (Toxic black mold) protein is Putative 15-O-acetyltransferase SAT12.